Reading from the N-terminus, the 408-residue chain is Acetate kinase (408 aa).

Asn7 is a binding site for Mg(2+). Lys14 contributes to the ATP binding site. Arg91 provides a ligand contact to substrate. The active-site Proton donor/acceptor is the Asp148. Residues 208-212, 283-285, and 331-335 contribute to the ATP site; these read HLGNG, DFR, and GIGEN. Glu384 is a Mg(2+) binding site.

Belongs to the acetokinase family. As to quaternary structure, homodimer. Mg(2+) is required as a cofactor. The cofactor is Mn(2+).

It is found in the cytoplasm. The catalysed reaction is acetate + ATP = acetyl phosphate + ADP. It participates in metabolic intermediate biosynthesis; acetyl-CoA biosynthesis; acetyl-CoA from acetate: step 1/2. Its function is as follows. Catalyzes the formation of acetyl phosphate from acetate and ATP. Can also catalyze the reverse reaction. In Methanosarcina acetivorans (strain ATCC 35395 / DSM 2834 / JCM 12185 / C2A), this protein is Acetate kinase.